The sequence spans 181 residues: Inner membrane-spanning protein YciB (181 aa).

The next 5 membrane-spanning stretches (helical) occupy residues 10 to 30 (LVIF…GALI), 50 to 70 (MHLI…ILHD), 72 to 92 (SFIK…LGVS), 118 to 138 (VTWY…YVAF), and 148 to 168 (FKVF…VVYL).

Belongs to the YciB family.

The protein localises to the cell inner membrane. Functionally, plays a role in cell envelope biogenesis, maintenance of cell envelope integrity and membrane homeostasis. This is Inner membrane-spanning protein YciB from Shewanella pealeana (strain ATCC 700345 / ANG-SQ1).